A 327-amino-acid polypeptide reads, in one-letter code: 2-keto-3-deoxygluconate permease (327 aa).

A run of 10 helical transmembrane segments spans residues 10-30 (IPGG…TFSP), 42-62 (GMIT…GASI), 73-93 (KSGT…AIAS), 95-115 (IIPE…LALV), 139-159 (AGAF…IILG), 163-183 (IASF…VGFA), 199-219 (VQTL…LTVI), 224-244 (LLGI…LIIA), 254-274 (TAGI…VLIA), and 289-309 (SLVA…TSIW).

Belongs to the KdgT transporter family.

Its subcellular location is the cell inner membrane. It catalyses the reaction 2-dehydro-3-deoxy-D-gluconate(in) + H(+)(in) = 2-dehydro-3-deoxy-D-gluconate(out) + H(+)(out). Functionally, catalyzes the proton-dependent uptake of 2-keto-3-deoxygluconate (KDG) into the cell. This chain is 2-keto-3-deoxygluconate permease, found in Escherichia coli O127:H6 (strain E2348/69 / EPEC).